The sequence spans 676 residues: ATP-dependent RNA helicase dbp-9 (676 aa).

The disordered stretch occupies residues 1–97; that stretch reads MAKRKLNETD…SEKDDADLTF (97 aa). Basic and acidic residues predominate over residues 70-90; the sequence is QQLKDEQKQQDEKDEKKQSEK. A Q motif motif is present at residues 95–123; sequence LTFSDLGLDPRLVQAVAKQSFEKPTLVQR. The 179-residue stretch at 126 to 304 folds into the Helicase ATP-binding domain; the sequence is IPLALAGQDV…KGFFCRNPTM (179 aa). Position 139 to 146 (139 to 146) interacts with ATP; the sequence is AKTGSGKT. Positions 251 to 254 match the DEAD box motif; sequence DEAD. Residues 317 to 541 enclose the Helicase C-terminal domain; the sequence is KLTQFYVKCG…PYNFNKDQME (225 aa). Residues 410–432 show a composition bias toward basic and acidic residues; it reads EDEKTEEKKEEQGEKKEGDEKKN. 2 disordered regions span residues 410 to 444 and 633 to 676; these read EDEK…RRDQ and FKKQ…RVRK. Over residues 642 to 663 the composition is skewed to basic residues; the sequence is TRGKKGAKGGKGGHGKYKKGPG.

The protein belongs to the DEAD box helicase family. DDX56/DBP9 subfamily.

It is found in the nucleus. The protein localises to the nucleolus. It carries out the reaction ATP + H2O = ADP + phosphate + H(+). ATP-binding RNA helicase involved in the biogenesis of 60S ribosomal subunits and is required for the normal formation of 25S and 5.8S rRNAs. The polypeptide is ATP-dependent RNA helicase dbp-9 (dbp-9) (Neurospora crassa (strain ATCC 24698 / 74-OR23-1A / CBS 708.71 / DSM 1257 / FGSC 987)).